Reading from the N-terminus, the 317-residue chain is MLGQSNYLALVGGGRQPKFPQNKLVIWDDAKQKVVITLEFRTSVLGVRLSKSRIVVALLNSIHTFVFSSPPKKLAVFETTDNPLGLACLGQKVLAFPGRSPGQVQLVELETGNVSIIPAHSTPLRAMALSPDGEVLATASEAGTLVRIFATSNCAKMAELRRGVDHAIIFSLAISPSNNLLAVTSDKSTLHVFNLPHPRNAPYSNQQASSSDDGVNKKWGILGKIPLLPRVFSDVYSFASAHFELGEEEPGPTYAPPLGTVLGRPPKGVIGWSNDNTILVVGSGSDGRWEKFVLRDDEEGKKHCIREGWKKYLGSGS.

2 WD repeats span residues 119–159 (AHST…KMAE) and 164–203 (VDHA…NAPY).

This sequence belongs to the WD repeat PROPPIN family.

The protein resides in the vacuole membrane. Its subcellular location is the cytoplasmic vesicle membrane. Its function is as follows. Involved in mitochondrial or peroxisomal functions and amino acid signaling pathways. The chain is SVP1-like protein 2 (hsv2) from Emericella nidulans (strain FGSC A4 / ATCC 38163 / CBS 112.46 / NRRL 194 / M139) (Aspergillus nidulans).